The sequence spans 235 residues: Orotidine 5'-phosphate decarboxylase (235 aa).

Residues D16, K38, 65–74, T120, R181, Q190, G210, and R211 contribute to the substrate site; that span reads DLKLHDIGNT. The active-site Proton donor is the K67.

It belongs to the OMP decarboxylase family. Type 1 subfamily. In terms of assembly, homodimer.

The catalysed reaction is orotidine 5'-phosphate + H(+) = UMP + CO2. The protein operates within pyrimidine metabolism; UMP biosynthesis via de novo pathway; UMP from orotate: step 2/2. In terms of biological role, catalyzes the decarboxylation of orotidine 5'-monophosphate (OMP) to uridine 5'-monophosphate (UMP). This Rhodopseudomonas palustris (strain BisA53) protein is Orotidine 5'-phosphate decarboxylase.